A 184-amino-acid chain; its full sequence is Large ribosomal subunit protein uL6 (184 aa).

The protein belongs to the universal ribosomal protein uL6 family. In terms of assembly, part of the 50S ribosomal subunit.

In terms of biological role, this protein binds to the 23S rRNA, and is important in its secondary structure. It is located near the subunit interface in the base of the L7/L12 stalk, and near the tRNA binding site of the peptidyltransferase center. This Mycoplasma genitalium (strain ATCC 33530 / DSM 19775 / NCTC 10195 / G37) (Mycoplasmoides genitalium) protein is Large ribosomal subunit protein uL6.